The chain runs to 137 residues: FAD synthase (137 aa).

ATP contacts are provided by residues 5-6 (TF), 10-13 (HPGH), and D88.

It belongs to the archaeal FAD synthase family. As to quaternary structure, homodimer. It depends on a divalent metal cation as a cofactor.

It catalyses the reaction FMN + ATP + H(+) = FAD + diphosphate. The protein operates within cofactor biosynthesis; FAD biosynthesis; FAD from FMN: step 1/1. Its function is as follows. Catalyzes the transfer of the AMP portion of ATP to flavin mononucleotide (FMN) to produce flavin adenine dinucleotide (FAD) coenzyme. This Archaeoglobus fulgidus (strain ATCC 49558 / DSM 4304 / JCM 9628 / NBRC 100126 / VC-16) protein is FAD synthase.